The sequence spans 815 residues: uncharacterized protein (815 aa).

The N-terminal stretch at 1-25 (MVVMKKKRILIVSAIVLLFLTVASA) is a signal peptide. 6 consecutive transmembrane segments (helical) span residues 127 to 147 (FGEA…CVRG), 157 to 177 (ILFI…GYYM), 311 to 331 (SFIA…LAFF), 333 to 353 (FLLQ…FILA), 372 to 392 (VYLL…TCFI), and 401 to 421 (GFGM…IGFH). The disordered stretch occupies residues 483 to 815 (KDGSNADGVT…DRLRRDERTR (333 aa)). Residues 513–543 (HAISRTPQKETANGIANHNSRSLKRNPQTLS) show a composition bias toward polar residues. Basic and acidic residues-rich tracts occupy residues 544 to 563 (KEQE…ENKQ) and 599 to 614 (QDKK…KEYV). Polar residues predominate over residues 619-630 (KQPNNQQQTDDA). Positions 648–658 (ENEKDTERTDQ) are enriched in basic and acidic residues. Positions 665-678 (EQNQNLETDQQQDF) are enriched in polar residues. Basic and acidic residues predominate over residues 696 to 705 (KTAEIKRSDQ). Over residues 720–732 (SPQSTKVENQPIA) the composition is skewed to polar residues. The segment covering 734 to 757 (NERKIRPSEPAKVHSDGIRVDEKQ) has biased composition (basic and acidic residues). The span at 773-793 (PSSQTIKRTEQSVNSFDQVSL) shows a compositional bias: polar residues. The span at 796 to 815 (IARRSSSKVEDRLRRDERTR) shows a compositional bias: basic and acidic residues.

Its subcellular location is the cell membrane. This is an uncharacterized protein from Bacillus subtilis (strain 168).